Consider the following 577-residue polypeptide: Methionine--tRNA ligase, mitochondrial (577 aa).

The 'HIGH' region signature appears at 25 to 37 (PIFYVNAAPHIGH). A 'KMSKS' region motif is present at residues 329–333 (KMSKS). Lysine 332 contributes to the ATP binding site.

It belongs to the class-I aminoacyl-tRNA synthetase family.

Its subcellular location is the mitochondrion matrix. It carries out the reaction tRNA(Met) + L-methionine + ATP = L-methionyl-tRNA(Met) + AMP + diphosphate. The protein is Methionine--tRNA ligase, mitochondrial (MSM1) of Candida albicans (Yeast).